The chain runs to 248 residues: Pyridoxine 5'-phosphate synthase (248 aa).

Residue Asn12 participates in 3-amino-2-oxopropyl phosphate binding. Position 14-15 (14-15) interacts with 1-deoxy-D-xylulose 5-phosphate; the sequence is DH. Arg23 provides a ligand contact to 3-amino-2-oxopropyl phosphate. His48 acts as the Proton acceptor in catalysis. The 1-deoxy-D-xylulose 5-phosphate site is built by Arg50 and His55. The Proton acceptor role is filled by Glu75. Residue Thr105 coordinates 1-deoxy-D-xylulose 5-phosphate. His196 (proton donor) is an active-site residue. Residues Gly197 and 218 to 219 each bind 3-amino-2-oxopropyl phosphate; that span reads GH.

This sequence belongs to the PNP synthase family. As to quaternary structure, homooctamer; tetramer of dimers.

The protein localises to the cytoplasm. It carries out the reaction 3-amino-2-oxopropyl phosphate + 1-deoxy-D-xylulose 5-phosphate = pyridoxine 5'-phosphate + phosphate + 2 H2O + H(+). It participates in cofactor biosynthesis; pyridoxine 5'-phosphate biosynthesis; pyridoxine 5'-phosphate from D-erythrose 4-phosphate: step 5/5. Its function is as follows. Catalyzes the complicated ring closure reaction between the two acyclic compounds 1-deoxy-D-xylulose-5-phosphate (DXP) and 3-amino-2-oxopropyl phosphate (1-amino-acetone-3-phosphate or AAP) to form pyridoxine 5'-phosphate (PNP) and inorganic phosphate. This chain is Pyridoxine 5'-phosphate synthase, found in Azotobacter vinelandii (strain DJ / ATCC BAA-1303).